Here is a 550-residue protein sequence, read N- to C-terminus: Membrane protein insertase YidC (550 aa).

6 helical membrane passes run 6–26, 333–353, 356–376, 430–450, 469–489, and 504–524; these read LVLFLVFSLSLVMLWNAWLKQ, VVDYGWLTVIAAPLFWVLSWI, VVGNWGWAIIIVTILIKLMFF, LPILVQIPVFISLYWVLLGSV, PYFILPVIMGVSMLIQMKLNP, and PVIFTFMFLWFPSGLVLYWVV.

Belongs to the OXA1/ALB3/YidC family. Type 1 subfamily. In terms of assembly, interacts with the Sec translocase complex via SecD. Specifically interacts with transmembrane segments of nascent integral membrane proteins during membrane integration.

It localises to the cell inner membrane. Required for the insertion and/or proper folding and/or complex formation of integral membrane proteins into the membrane. Involved in integration of membrane proteins that insert both dependently and independently of the Sec translocase complex, as well as at least some lipoproteins. Aids folding of multispanning membrane proteins. This is Membrane protein insertase YidC from Aromatoleum aromaticum (strain DSM 19018 / LMG 30748 / EbN1) (Azoarcus sp. (strain EbN1)).